Consider the following 665-residue polypeptide: Translation factor guf1, mitochondrial (665 aa).

A mitochondrion-targeting transit peptide spans 1–40; the sequence is MRGCLQLARWLSAAPTRPAASHWPGLCAAPRFFSHSAILR. A tr-type G domain is found at 67–247; that stretch reads ERYRNFCIVA…TVVDKIPAPI (181 aa). GTP is bound by residues 76 to 83, 140 to 144, and 194 to 197; these read AHVDHGKS, DTPGH, and NKVD.

This sequence belongs to the TRAFAC class translation factor GTPase superfamily. Classic translation factor GTPase family. LepA subfamily.

Its subcellular location is the mitochondrion inner membrane. It catalyses the reaction GTP + H2O = GDP + phosphate + H(+). Promotes mitochondrial protein synthesis. May act as a fidelity factor of the translation reaction, by catalyzing a one-codon backward translocation of tRNAs on improperly translocated ribosomes. Binds to mitochondrial ribosomes in a GTP-dependent manner. The sequence is that of Translation factor guf1, mitochondrial (guf1) from Aspergillus terreus (strain NIH 2624 / FGSC A1156).